The chain runs to 150 residues: MHETRIVVGPAPFSVGEEYSWLAARDEDGAVVTFTGKVRNHNLGDSVKALTLEHYPGMTEKALAEIVAKARSRWPLGRVTVIHRVGELWPGDEIVFVGVTSAHRSSAFDAGQFIMDYLKTRAPFWKREATPEGDRWVEARDSDQQLAKRW.

Residues 37–39 (KVR), 103–104 (HR), K119, and 126–128 (KRE) each bind substrate.

This sequence belongs to the MoaE family. Heterotetramer of 2 MoaD subunits and 2 MoaE subunits. Also stable as homodimer. The enzyme changes between these two forms during catalysis.

The enzyme catalyses 2 [molybdopterin-synthase sulfur-carrier protein]-C-terminal-Gly-aminoethanethioate + cyclic pyranopterin phosphate + H2O = molybdopterin + 2 [molybdopterin-synthase sulfur-carrier protein]-C-terminal Gly-Gly + 2 H(+). It participates in cofactor biosynthesis; molybdopterin biosynthesis. Converts molybdopterin precursor Z into molybdopterin. This requires the incorporation of two sulfur atoms into precursor Z to generate a dithiolene group. The sulfur is provided by MoaD. This Salmonella typhi protein is Molybdopterin synthase catalytic subunit (moaE).